A 435-amino-acid polypeptide reads, in one-letter code: Adenylosuccinate synthetase (435 aa).

GTP-binding positions include 19 to 25 and 49 to 51; these read GDEGKGK and GHT. Catalysis depends on Asp-20, which acts as the Proton acceptor. Mg(2+) contacts are provided by Asp-20 and Gly-49. Residues 20–23, 47–50, Thr-139, Arg-153, Asn-233, Thr-248, and Arg-312 contribute to the IMP site; these read DEGK and NAGH. Residue His-50 is the Proton donor of the active site. Position 308–314 (308–314) interacts with substrate; sequence VTTGRKR. GTP-binding positions include Arg-314, 340–342, and 422–424; these read KLD and GVG.

Belongs to the adenylosuccinate synthetase family. Homodimer. It depends on Mg(2+) as a cofactor.

It is found in the cytoplasm. It carries out the reaction IMP + L-aspartate + GTP = N(6)-(1,2-dicarboxyethyl)-AMP + GDP + phosphate + 2 H(+). It functions in the pathway purine metabolism; AMP biosynthesis via de novo pathway; AMP from IMP: step 1/2. In terms of biological role, plays an important role in the de novo pathway and in the salvage pathway of purine nucleotide biosynthesis. Catalyzes the first committed step in the biosynthesis of AMP from IMP. The sequence is that of Adenylosuccinate synthetase from Brugia malayi (Filarial nematode worm).